A 336-amino-acid chain; its full sequence is Zinc-type alcohol dehydrogenase-like protein SE_1777 (336 aa).

Belongs to the zinc-containing alcohol dehydrogenase family. Quinone oxidoreductase subfamily.

The protein is Zinc-type alcohol dehydrogenase-like protein SE_1777 of Staphylococcus epidermidis (strain ATCC 12228 / FDA PCI 1200).